Reading from the N-terminus, the 269-residue chain is Hydroxyethylthiazole kinase (269 aa).

M41 contacts substrate. ATP contacts are provided by R117 and S163. G190 is a binding site for substrate.

The protein belongs to the Thz kinase family. It depends on Mg(2+) as a cofactor.

It catalyses the reaction 5-(2-hydroxyethyl)-4-methylthiazole + ATP = 4-methyl-5-(2-phosphooxyethyl)-thiazole + ADP + H(+). It participates in cofactor biosynthesis; thiamine diphosphate biosynthesis; 4-methyl-5-(2-phosphoethyl)-thiazole from 5-(2-hydroxyethyl)-4-methylthiazole: step 1/1. Functionally, catalyzes the phosphorylation of the hydroxyl group of 4-methyl-5-beta-hydroxyethylthiazole (THZ). The polypeptide is Hydroxyethylthiazole kinase (Latilactobacillus sakei subsp. sakei (strain 23K) (Lactobacillus sakei subsp. sakei)).